We begin with the raw amino-acid sequence, 206 residues long: Putative 3-methyladenine DNA glycosylase (206 aa).

The protein belongs to the DNA glycosylase MPG family.

In Salinibacter ruber (strain DSM 13855 / M31), this protein is Putative 3-methyladenine DNA glycosylase.